Consider the following 286-residue polypeptide: Putative WUSCHEL-related homeobox 2 (286 aa).

Residues 1–25 are disordered; the sequence is MAPAVQQQQSGGGGGSTGAAAVGST. Residues 23-87 constitute a DNA-binding region (homeobox; WUS-type); sequence GSTTRWCPTP…NHKARDRQKL (65 aa).

Belongs to the WUS homeobox family.

It localises to the nucleus. In terms of biological role, transcription factor which may be involved in developmental processes. This Oryza sativa subsp. japonica (Rice) protein is Putative WUSCHEL-related homeobox 2 (WOX2).